Consider the following 199-residue polypeptide: DnaJ homolog subfamily C member 5B (199 aa).

Phosphoserine is present on residues Ser-14 and Ser-16. The J domain maps to 19–84 (ALYEILGLQK…SKRNIYDKYG (66 aa)).

As to quaternary structure, interacts with the chaperone complex consisting of HSC70 and SGTA. In terms of processing, palmitoylated.

The protein resides in the membrane. The polypeptide is DnaJ homolog subfamily C member 5B (DNAJC5B) (Ailuropoda melanoleuca (Giant panda)).